The sequence spans 135 residues: Actin-related protein 2/3 complex subunit 5B (135 aa).

Belongs to the ARPC5 family. As to quaternary structure, component of the Arp2/3 complex composed of ARP2, ARP3, ARPC1/p41-ARC, ARPC2/p34-ARC, ARPC3/p21-ARC, ARPC4/p20-ARC and ARPC5/p16-ARC.

It localises to the cytoplasm. The protein resides in the cytoskeleton. It is found in the cell projection. Its function is as follows. Functions as a component of the Arp2/3 complex which is involved in regulation of actin polymerization and together with an activating nucleation-promoting factor (NPF) mediates the formation of branched actin networks. Arp2/3 complex plays a critical role in the control of cell morphogenesis via the modulation of cell polarity development. The chain is Actin-related protein 2/3 complex subunit 5B (ARPC5B) from Arabidopsis thaliana (Mouse-ear cress).